Reading from the N-terminus, the 471-residue chain is ATP synthase subunit beta 2 (471 aa).

ATP is bound at residue 157-164; it reads GGAGVGKT.

The protein belongs to the ATPase alpha/beta chains family. F-type ATPases have 2 components, CF(1) - the catalytic core - and CF(0) - the membrane proton channel. CF(1) has five subunits: alpha(3), beta(3), gamma(1), delta(1), epsilon(1). CF(0) has three main subunits: a(1), b(2) and c(9-12). The alpha and beta chains form an alternating ring which encloses part of the gamma chain. CF(1) is attached to CF(0) by a central stalk formed by the gamma and epsilon chains, while a peripheral stalk is formed by the delta and b chains.

It localises to the cell inner membrane. The enzyme catalyses ATP + H2O + 4 H(+)(in) = ADP + phosphate + 5 H(+)(out). Functionally, produces ATP from ADP in the presence of a proton gradient across the membrane. The catalytic sites are hosted primarily by the beta subunits. The chain is ATP synthase subunit beta 2 from Pelobacter propionicus (strain DSM 2379 / NBRC 103807 / OttBd1).